Here is a 247-residue protein sequence, read N- to C-terminus: MMNESQPKLKYKRILLKFSGEALMGKSQFGIDPSVLDSLARDIAELIHMGVEVGLVLGGGNLFRGKALSQAGVGRVTGDHMGMLATLMNALALRDALERIDLPARIMSAIPMLGVVDPYHRRKAITHLRNGQVVIFAAGTGNPFFTTDTAACLRAIEIGADIVLKATKVDGVYSADPLKNPDAKRYDYLTYKEVLTKGLEVMDSTAICLCQDQGMPLQVFDMAAPNALKRIVTGEQVGTIVGANHDQ.

Residue 17 to 20 (KFSG) participates in ATP binding. Gly59 contacts UMP. Gly60 and Arg64 together coordinate ATP. Residues Asp79 and 140-147 (TGNPFFTT) contribute to the UMP site. ATP is bound by residues Thr167, Tyr173, and Asp176.

This sequence belongs to the UMP kinase family. In terms of assembly, homohexamer.

Its subcellular location is the cytoplasm. The enzyme catalyses UMP + ATP = UDP + ADP. It participates in pyrimidine metabolism; CTP biosynthesis via de novo pathway; UDP from UMP (UMPK route): step 1/1. Its activity is regulated as follows. Inhibited by UTP. Its function is as follows. Catalyzes the reversible phosphorylation of UMP to UDP. In Legionella pneumophila (strain Paris), this protein is Uridylate kinase.